A 212-amino-acid chain; its full sequence is WAP four-disulfide core domain protein 1 (212 aa).

The first 26 residues, 1–26 (MGSCDRKALWALSFLLLLLGSSSVQG), serve as a signal peptide directing secretion. The disordered stretch occupies residues 43–62 (EEVAATGSRQPHADRCPPPP). Positions 51-100 (RQPHADRCPPPPRTLPPGACQATRCQSDSECPRHRRCCYNGCAYACLEAV) constitute a WAP domain. 4 disulfide bridges follow: Cys58–Cys88, Cys70–Cys92, Cys75–Cys87, and Cys81–Cys96. The tract at residues 191–212 (EYPEGDSKYVAEPGKGQQRHFP) is disordered.

In terms of tissue distribution, vascular smooth muscle and prostate. Periacinar ring.

It is found in the secreted. Has growth inhibitory activity. In Rattus norvegicus (Rat), this protein is WAP four-disulfide core domain protein 1 (Wfdc1).